Here is a 547-residue protein sequence, read N- to C-terminus: Nitrate transporter 2.1 (547 aa).

12 consecutive transmembrane segments (helical) span residues 53–73 (WICF…APII), 86–106 (NAGV…GIVV), 113–133 (YGAA…ALVT), 143–163 (FFIG…GTMF), 173–193 (AIAA…MPLI), 211–231 (AFFV…LLGI), 262–280 (LGNY…SFGV), 296–316 (FGLN…MNLF), 338–358 (IWAL…LGKV), 366–386 (IVIM…HFGI), 400–420 (GLVG…WFAG), and 433–453 (GFVY…FIWF).

The protein belongs to the major facilitator superfamily. Nitrate/nitrite porter (TC 2.A.1.8) family.

It localises to the cell membrane. With respect to regulation, nitrite transport mediated by system 1 is very sensitive to inhibition by nitrate. Its function is as follows. Involved in nitrate transport, but does not seem to be able to mediate transport by its own. Acts as a dual component transporter with NAR2 (system 1). Imports nitrate with high affinity when expressed with NAR2 in a heterologous system (Xenopus oocytes). Involved in a high affinity and a high capacity transport specific for both nitrate and nitrite. This Chlamydomonas reinhardtii (Chlamydomonas smithii) protein is Nitrate transporter 2.1.